The sequence spans 458 residues: UDP-N-acetylmuramoylalanine--D-glutamate ligase (458 aa).

Residue 118–124 (GTNGKTT) coordinates ATP.

The protein belongs to the MurCDEF family.

It is found in the cytoplasm. It carries out the reaction UDP-N-acetyl-alpha-D-muramoyl-L-alanine + D-glutamate + ATP = UDP-N-acetyl-alpha-D-muramoyl-L-alanyl-D-glutamate + ADP + phosphate + H(+). Its pathway is cell wall biogenesis; peptidoglycan biosynthesis. In terms of biological role, cell wall formation. Catalyzes the addition of glutamate to the nucleotide precursor UDP-N-acetylmuramoyl-L-alanine (UMA). The chain is UDP-N-acetylmuramoylalanine--D-glutamate ligase from Ligilactobacillus salivarius (strain UCC118) (Lactobacillus salivarius).